A 412-amino-acid chain; its full sequence is MADNKRIVLAYSGGLDTSVAISYLKERTGKDVVAVSLDVGQGGESLETIKQRALACGAVESYVVDARDEFANEYCMKALKANAMYEGVYPLVSAISRPLISKHLVRAAHQFGADTISHGCTGKGNDQVRFEVSIASIDPTLKAISPIRDLSLTRDVEIAFAKEHKLPITQTEKSPYSIDQNVWGRAIETGFLEDPWNGPTKDCYSYTDDPAFPPVEDEVVIEFKEGVPVKIDGRDVTPLQAIEEMNRRAGAQGIGRIDLIEDRLVGIKSRELYEAPGAVALITAHQELENCCLEREQHRIKRDIDKRWGELVYDAQWFSPATQSLNAFIEDTQKYVSGEIRMVLHGGRAVVTGRRSDSSLYDYKLATYDSGDTFDQKSSNGFIDIYGLPSRVAAARDVKFGNGIEVPKNTVE.

10–18 serves as a coordination point for ATP; that stretch reads AYSGGLDTS. Residue Tyr-89 participates in L-citrulline binding. Gly-119 provides a ligand contact to ATP. L-aspartate is bound by residues Thr-121, Asn-125, and Asp-126. Asn-125 lines the L-citrulline pocket. L-citrulline-binding residues include Arg-129, Ser-177, Glu-261, and Tyr-273.

It belongs to the argininosuccinate synthase family. Type 1 subfamily. In terms of assembly, homotetramer.

The protein localises to the cytoplasm. It carries out the reaction L-citrulline + L-aspartate + ATP = 2-(N(omega)-L-arginino)succinate + AMP + diphosphate + H(+). Its pathway is amino-acid biosynthesis; L-arginine biosynthesis; L-arginine from L-ornithine and carbamoyl phosphate: step 2/3. In Bifidobacterium longum subsp. infantis (strain ATCC 15697 / DSM 20088 / JCM 1222 / NCTC 11817 / S12), this protein is Argininosuccinate synthase.